The chain runs to 76 residues: Conotoxin Cal5a L3 (76 aa).

Positions 1-22 are cleaved as a signal peptide; sequence MRFYIGLMAALMLTSVLRTDSA. Residues 23–42 constitute a propeptide that is removed on maturation; the sequence is SVGQTGTKSELAVIERVIRQ. A 4-hydroxyproline modification is found at P50. 4-hydroxyproline; partial occurs at positions 58, 62, and 64.

It belongs to the conotoxin T superfamily. In terms of processing, contains 2 disulfide bonds that can be either 'C1-C3, C2-C4' or 'C1-C4, C2-C3', since these disulfide connectivities have been observed for conotoxins with cysteine framework V (for examples, see AC P0DQQ7 and AC P81755). As to expression, expressed by the venom duct.

The protein resides in the secreted. Probable neurotoxin with unknown target. Possibly targets ion channels. The chain is Conotoxin Cal5a L3 from Californiconus californicus (California cone).